We begin with the raw amino-acid sequence, 32 residues long: Zinc metalloproteinase/disintegrin-like CdtV1 (32 aa).

Intrachain disulfides connect cysteine 5–cysteine 14 and cysteine 7–cysteine 15.

It belongs to the venom metalloproteinase (M12B) family. P-II subfamily. P-IIa sub-subfamily. Monomer. As to expression, expressed by the venom gland.

The protein resides in the secreted. Functionally, snake venom metalloproteinase that impairs hemostasis in the envenomed animal. The polypeptide is Zinc metalloproteinase/disintegrin-like CdtV1 (Crotalus durissus terrificus (South American rattlesnake)).